Here is an 813-residue protein sequence, read N- to C-terminus: Phosphate transporter PHO1 homolog 3 (813 aa).

One can recognise an SPX domain in the interval 1–359; that stretch reads MKFGKEFSSQ…SRDATKPYMK (359 aa). Residues 1 to 411 lie on the Cytoplasmic side of the membrane; it reads MKFGKEFSSQ…KAKRERHRIT (411 aa). A disordered region spans residues 214–266; it reads EHMEAIQEGGSSRAGLMEDDEEDEDEQNETSVVSTGAIDNETTTSRMRGARPS. Positions 230–241 are enriched in acidic residues; that stretch reads MEDDEEDEDEQN. A helical membrane pass occupies residues 412 to 432; that stretch reads FSTGFSAGCVFSLIVALVAII. The Extracellular segment spans residues 433 to 450; that stretch reads RTRNLLEMEGQKEYMNTM. A helical membrane pass occupies residues 451-471; the sequence is FPLYSLFGFIVLHIIVYAANI. Residues 472-496 are Cytoplasmic-facing; the sequence is YYWRRYRVNYSFIFGFKQGTELGYR. The helical transmembrane segment at 497-517 threads the bilayer; sequence QVLLVGFSIGVLALLCVLANL. The Extracellular portion of the chain corresponds to 518-533; the sequence is DMEADPKTKAYQARTE. A helical membrane pass occupies residues 534–554; the sequence is ILPLILLAAMFIVLVLPFNYF. Topologically, residues 555-684 are cytoplasmic; it reads YRSSRFFFLT…SIQKGQVAWR (130 aa). An EXS domain is found at 618–813; that stretch reads KESDVYNTFF…NYDEDDDKDN (196 aa). The chain crosses the membrane as a helical span at residues 685–705; sequence VLAAVFSFIAAIFCTYWDFVH. At 706 to 729 the chain is on the extracellular side; the sequence is DWGLLNRTSKNRWLRDKLLVPQKK. A helical membrane pass occupies residues 730–750; that stretch reads VYFIAMVLNVLLRFAWIQTVL. The Cytoplasmic portion of the chain corresponds to 751 to 813; it reads DFNFSFMHRQ…NYDEDDDKDN (63 aa).

This sequence belongs to the SYG1 (TC 2.A.94) family. As to expression, expressed in vascular cylinder of roots, leaves and filaments. Expressed in receptacle and stigma apex.

The protein resides in the cell membrane. In terms of biological role, may transport inorganic phosphate (Pi). This Arabidopsis thaliana (Mouse-ear cress) protein is Phosphate transporter PHO1 homolog 3 (PHO1;H3).